The primary structure comprises 502 residues: Alpha-globin transcription factor CP2 (502 aa).

A Grh/CP2 DB domain is found at 63 to 300 (EILPFQYVLC…SPGFNSSHSS (238 aa)). The interval 133–386 (EHQQLEGWRW…LFNALKGRMV (254 aa)) is DNA-binding. Residues 241–265 (KGADRKQKIDREKMEKRTPHEKEKY) show a composition bias toward basic and acidic residues. Disordered regions lie at residues 241-268 (KGADRKQKIDREKMEKRTPHEKEKYQPS) and 294-326 (FNSSHSSFSLGEGNGSPNHQPEPPPPVTDNLLP). Ser-353 is subject to Phosphoserine.

This sequence belongs to the grh/CP2 family. CP2 subfamily. In terms of assembly, binds to DNA as a dimer. Interacts with UBP1 and PIAS1, and is probably part of a complex containing TFCP2, UBP1 and PIAS1. Component of the SSP (stage selector protein) complex, which appears to be a heteromer of TFCP2 and 2 copies of NFE4.

It localises to the nucleus. Binds a variety of cellular promoters including fibrinogen, alpha-globin promoters. Activation of the alpha-globin promoter in erythroid cells is via synergistic interaction with UBP1. Functions as part of the SSP (stage selector protein) complex. Facilitates the interaction of the gamma-globin genes with enhancer elements contained in the locus control region in fetal erythroid cells. Interacts by binding to the stage selector element (SSE) in the proximal gamma-globin promoter. The protein is Alpha-globin transcription factor CP2 (Tfcp2) of Mus musculus (Mouse).